The primary structure comprises 156 residues: Small ribosomal subunit protein uS7 (156 aa).

It belongs to the universal ribosomal protein uS7 family. In terms of assembly, part of the 30S ribosomal subunit. Contacts proteins S9 and S11.

In terms of biological role, one of the primary rRNA binding proteins, it binds directly to 16S rRNA where it nucleates assembly of the head domain of the 30S subunit. Is located at the subunit interface close to the decoding center, probably blocks exit of the E-site tRNA. The chain is Small ribosomal subunit protein uS7 from Idiomarina loihiensis (strain ATCC BAA-735 / DSM 15497 / L2-TR).